Consider the following 479-residue polypeptide: GTPase Obg (479 aa).

Residues 2–159 (PRFVDRVVIH…RDLTLELKTV (158 aa)) enclose the Obg domain. Residues 160 to 340 (ADVGLVGFPS…LIFGLWQMVS (181 aa)) form the OBG-type G domain. Residues 166–173 (GFPSAGKS), 191–195 (FTTLV), 212–215 (DVPG), 292–295 (NKID), and 321–323 (STV) contribute to the GTP site. Ser173 and Thr193 together coordinate Mg(2+). The OCT domain occupies 358–436 (PVPVDDSGFD…IGEMTFDWEP (79 aa)). The tract at residues 438 to 479 (TPAGGHVAMSGRGTDVRLERSDRVGAAERKAARRQRRERDDD) is disordered. A compositionally biased stretch (basic and acidic residues) spans 451–467 (TDVRLERSDRVGAAERK).

This sequence belongs to the TRAFAC class OBG-HflX-like GTPase superfamily. OBG GTPase family. As to quaternary structure, monomer. Mg(2+) serves as cofactor.

Its subcellular location is the cytoplasm. Its function is as follows. An essential GTPase which binds GTP, GDP and possibly (p)ppGpp with moderate affinity, with high nucleotide exchange rates and a fairly low GTP hydrolysis rate. Plays a role in control of the cell cycle, stress response, ribosome biogenesis and in those bacteria that undergo differentiation, in morphogenesis control. The protein is GTPase Obg of Mycobacterium marinum (strain ATCC BAA-535 / M).